The following is a 787-amino-acid chain: DNA ligase (787 aa).

NAD(+) is bound by residues 32–36, 81–82, and Glu-121; these read DAEYD and SL. The active-site N6-AMP-lysine intermediate is Lys-123. Residues Arg-144, Glu-181, Lys-297, and Lys-321 each contribute to the NAD(+) site. Cys-415, Cys-418, Cys-445, and Cys-451 together coordinate Zn(2+). The BRCT domain maps to 703–787; sequence VEGLPLAGQT…RLTELGVAVD (85 aa).

Belongs to the NAD-dependent DNA ligase family. LigA subfamily. Mg(2+) serves as cofactor. The cofactor is Mn(2+).

The enzyme catalyses NAD(+) + (deoxyribonucleotide)n-3'-hydroxyl + 5'-phospho-(deoxyribonucleotide)m = (deoxyribonucleotide)n+m + AMP + beta-nicotinamide D-nucleotide.. Its function is as follows. DNA ligase that catalyzes the formation of phosphodiester linkages between 5'-phosphoryl and 3'-hydroxyl groups in double-stranded DNA using NAD as a coenzyme and as the energy source for the reaction. It is essential for DNA replication and repair of damaged DNA. This is DNA ligase from Pseudomonas syringae pv. tomato (strain ATCC BAA-871 / DC3000).